The sequence spans 257 residues: MRYALGVEYDGSEFQGWQQLGEHGGPSVQASLQAALSSVADAPVQVVCAGRTDAGVHGECQVVHFDSDARREPRGWMLGTTARLPPSIAVRWCVPAADDFHARFSARARRYRYRLLNRQIRPALYRQTLSWERRPLDADAMHGAAQALLGENDFSAFRSVQCQALHARRHLQAIHVQRIGEVVEVQVQANAFLHHMVRNIVGSLILVGTGEQPADWIATLLAGRDRTVAGPTAPPQGLVFIGPLYPAEWHLPAEVTQ.

The Nucleophile role is filled by aspartate 53. Tyrosine 111 provides a ligand contact to substrate.

Belongs to the tRNA pseudouridine synthase TruA family. Homodimer.

It carries out the reaction uridine(38/39/40) in tRNA = pseudouridine(38/39/40) in tRNA. Formation of pseudouridine at positions 38, 39 and 40 in the anticodon stem and loop of transfer RNAs. This Xanthomonas axonopodis pv. citri (strain 306) protein is tRNA pseudouridine synthase A.